Here is a 272-residue protein sequence, read N- to C-terminus: uncharacterized protein (272 aa).

Lysine 185 (schiff-base intermediate with substrate) is an active-site residue.

Belongs to the DeoC/FbaB aldolase family.

This is an uncharacterized protein from Saccharolobus solfataricus (strain ATCC 35092 / DSM 1617 / JCM 11322 / P2) (Sulfolobus solfataricus).